Here is a 72-residue protein sequence, read N- to C-terminus: Candidate secreted effector protein MPL124499 (72 aa).

A signal peptide spans 1 to 21 (MKLSIFAAIFMAFVSLNQVFG).

It belongs to the CPGH1 family.

It localises to the secreted. Its subcellular location is the host cell. It is found in the host cytoplasm. The protein localises to the host nucleus. Rust effector delivered into infected tissues to modulate host functions and contribute to pathogen virulence. Enhances leaf colonization by the bacteria Pseudomonas syringae and the oomycete Hyaloperonospora arabidopsidis pathogens in an Arabidopsis thaliana infection model. The sequence is that of Candidate secreted effector protein MPL124499 from Melampsora larici-populina (strain 98AG31 / pathotype 3-4-7) (Poplar leaf rust fungus).